The following is a 176-amino-acid chain: Probable Brix domain-containing ribosomal biogenesis protein (176 aa).

The Brix domain maps to 6–176 (IEIVFTSSRD…QLYDRNKNIN (171 aa)).

Its function is as follows. Probably involved in the biogenesis of the ribosome. This chain is Probable Brix domain-containing ribosomal biogenesis protein, found in Sulfurisphaera tokodaii (strain DSM 16993 / JCM 10545 / NBRC 100140 / 7) (Sulfolobus tokodaii).